A 147-amino-acid chain; its full sequence is Deoxyuridine 5'-triphosphate nucleotidohydrolase (147 aa).

Substrate is bound by residues 67–69, asparagine 80, and 84–86; these read RSG and TID.

The protein belongs to the dUTPase family. Requires Mg(2+) as cofactor.

The enzyme catalyses dUTP + H2O = dUMP + diphosphate + H(+). Its pathway is pyrimidine metabolism; dUMP biosynthesis; dUMP from dCTP (dUTP route): step 2/2. In terms of biological role, this enzyme is involved in nucleotide metabolism: it produces dUMP, the immediate precursor of thymidine nucleotides and it decreases the intracellular concentration of dUTP so that uracil cannot be incorporated into DNA. In Anaeromyxobacter sp. (strain Fw109-5), this protein is Deoxyuridine 5'-triphosphate nucleotidohydrolase.